Reading from the N-terminus, the 158-residue chain is Transcription factor BTF3 homolog 4 (158 aa).

An NAC-A/B domain is found at 33-98 (TADDKKLQSS…AETKQLTEML (66 aa)). The tract at residues 125–158 (LDNKAPKAEDIDEEDDDVPDLVENFDEASKNEAN) is disordered. Positions 134–150 (DIDEEDDDVPDLVENFD) are enriched in acidic residues.

Belongs to the NAC-beta family.

The polypeptide is Transcription factor BTF3 homolog 4 (btf3l4) (Danio rerio (Zebrafish)).